Here is a 574-residue protein sequence, read N- to C-terminus: Isocitrate dehydrogenase kinase/phosphatase (574 aa).

ATP-binding positions include 311–317 and Lys332; that span reads APGIRGM. Asp367 is an active-site residue.

This sequence belongs to the AceK family.

Its subcellular location is the cytoplasm. It catalyses the reaction L-seryl-[isocitrate dehydrogenase] + ATP = O-phospho-L-seryl-[isocitrate dehydrogenase] + ADP + H(+). Bifunctional enzyme which can phosphorylate or dephosphorylate isocitrate dehydrogenase (IDH) on a specific serine residue. This is a regulatory mechanism which enables bacteria to bypass the Krebs cycle via the glyoxylate shunt in response to the source of carbon. When bacteria are grown on glucose, IDH is fully active and unphosphorylated, but when grown on acetate or ethanol, the activity of IDH declines drastically concomitant with its phosphorylation. The chain is Isocitrate dehydrogenase kinase/phosphatase from Shigella boydii serotype 4 (strain Sb227).